The sequence spans 1069 residues: MKSSRDEAVGHHSISSFEVMLSALFIMLMVFSIGLIAVSWLAVKESEGDAALGKSHEVRGTFKITSGVTYNPNLQDKHSVDFKVLAFDLQQMIDEIFESSSLKNEYEKSKVFQFEKGSVIVLFDLFFAQWVSDKNVKEELIQGIEANISSQLVTLHIDLNSIDITASLSDFTTAVPVTTSDKLTTSSPMTTSASLGNLSTTVAATTSAPLCNLSTATFATTSGHVSIECQPGSRPCAHAWNCVATDLFCDGEVNCPDGSDEDTGLCATACDGRFLLTGDSGVFQADRYPRPDESGVVCRWIIRVNQGLSIRMNFGSFIPHYTDVLDIYEGIGPSKILRGSFWETDPGTIRIFSNLVTVTFLIKSDEYDYIGFNATYSTFNNSELNNYEKIDCTFDDGFCFWTQDLDDDNEWERIQVTTFPCYTGPRFDHTYGNGSGFYISTPTEQGWRSERVGLSSLSLDLTSEPVCLHFWYYMCCENVYNLNIHISSAETTDKIVFQRKGNYGRNWNYGQVTLNETGEFKVVFNAFRNRGCSTIALDDISLTNGICSQSPYPEPTLVPTPPPELPTDCGGPFELWEPNSTFSSPNFPDKYPNQASCIWNLNAQRGKNIQLHFQEFDLENINDVVEVRDGGEFDSLLLAVYTGPGPVKDLFSTTNRMTVIFTTNMETRRKGFKANFTSGYYLGIPEPCQDDEFQCKDGNCIPLGNLCDSYPHCRDGSDEASCVRFLNGTRSNNGLVQFNIHSIWHIACAENWTTQISNEVCHLLGLGSANSSMPISSTGGGPFVRVNQAPNGSLILTPSLQCSQDSLILLQCNHKSCGEKKVTQKVSPKIVGGSDAQAGAWPWVVALYHRDRSTDRLLCGASLVSSDWLVSAAHCVYRRNLDPTRWTAVLGLHMQSNLTSPQVVRRVVDQIVINPHYDRRRKVNDIAMMHLEFKVNYTDYIQPICLPEENQIFIPGRTCSIAGWGYDKINAGSTVDVLKEADVPLISNEKCQQQLPEYNITESMICAGYEEGGIDSCQGDSGGPLMCQENNRWFLVGVTSFGVQCALPNHPGVYVRVSQFIEWIHSFLH.

At 1-18 the chain is on the cytoplasmic side; the sequence is MKSSRDEAVGHHSISSFE. Residues 19 to 47 traverse the membrane as a helical; Signal-anchor for type II membrane protein segment; that stretch reads VMLSALFIMLMVFSIGLIAVSWLAVKESE. Residues 48 to 1069 lie on the Extracellular side of the membrane; that stretch reads GDAALGKSHE…FIEWIHSFLH (1022 aa). Residues 54–169 enclose the SEA domain; it reads KSHEVRGTFK…NSIDITASLS (116 aa). Residues N147, N197, and N212 are each glycosylated (N-linked (GlcNAc...) asparagine). An LDL-receptor class A 1 domain is found at 227–268; that stretch reads IECQPGSRPCAHAWNCVATDLFCDGEVNCPDGSDEDTGLCAT. Cystine bridges form between C229/C242, C236/C255, C249/C266, and C270/C298. The 110-residue stretch at 270 to 379 folds into the CUB 1 domain; that stretch reads CDGRFLLTGD…IGFNATYSTF (110 aa). N-linked (GlcNAc...) asparagine glycosylation is found at N373, N380, N433, N515, N579, and N675. The region spanning 387–549 is the MAM domain; sequence YEKIDCTFDD…ISLTNGICSQ (163 aa). C569 and C597 form a disulfide bridge. The CUB 2 domain maps to 569-679; sequence CGGPFELWEP…KGFKANFTSG (111 aa). Residues 686 to 724 form the LDL-receptor class A 2 domain; sequence EPCQDDEFQCKDGNCIPLGNLCDSYPHCRDGSDEASCVR. 3 disulfide bridges follow: C688–C700, C695–C713, and C707–C722. One can recognise an SRCR domain in the interval 723 to 816; that stretch reads VRFLNGTRSN…LILLQCNHKS (94 aa). 4 N-linked (GlcNAc...) asparagine glycosylation sites follow: N727, N751, N770, and N791. 6 cysteine pairs are disulfide-bonded: C802–C812, C817–C945, C859–C875, C959–C1027, C991–C1006, and C1017–C1045. A Peptidase S1 domain is found at 830 to 1069; sequence IVGGSDAQAG…FIEWIHSFLH (240 aa). The Charge relay system role is filled by H874. Residue N897 is glycosylated (N-linked (GlcNAc...) asparagine). The active-site Charge relay system is the D925. N-linked (GlcNAc...) asparagine glycosylation is found at N936 and N999. Catalysis depends on S1021, which acts as the Charge relay system.

It belongs to the peptidase S1 family. Heterodimer of a catalytic (light) chain and a multidomain (heavy) chain linked by a disulfide bond. The chains are derived from a single precursor that is cleaved by a trypsin-like protease.

The protein resides in the membrane. The catalysed reaction is Activation of trypsinogen by selective cleavage of 6-Lys-|-Ile-7 bond.. Functionally, responsible for initiating activation of pancreatic proteolytic proenzymes (trypsin, chymotrypsin and carboxypeptidase A). It catalyzes the conversion of trypsinogen to trypsin which in turn activates other proenzymes including chymotrypsinogen, procarboxypeptidases, and proelastases. The sequence is that of Enteropeptidase (Tmprss15) from Mus musculus (Mouse).